A 251-amino-acid chain; its full sequence is Hydroxyacylglutathione hydrolase (251 aa).

Zn(2+) contacts are provided by His53, His55, Asp57, His58, His110, Asp127, and His165.

The protein belongs to the metallo-beta-lactamase superfamily. Glyoxalase II family. In terms of assembly, monomer. Requires Zn(2+) as cofactor.

The catalysed reaction is an S-(2-hydroxyacyl)glutathione + H2O = a 2-hydroxy carboxylate + glutathione + H(+). The protein operates within secondary metabolite metabolism; methylglyoxal degradation; (R)-lactate from methylglyoxal: step 2/2. Thiolesterase that catalyzes the hydrolysis of S-D-lactoyl-glutathione to form glutathione and D-lactic acid. In Shigella dysenteriae serotype 1 (strain Sd197), this protein is Hydroxyacylglutathione hydrolase.